The primary structure comprises 214 residues: Pyridoxine/pyridoxamine 5'-phosphate oxidase (214 aa).

Residues 9–12 (RLDY) and Lys67 contribute to the substrate site. Residues 62–67 (RMVLLK), 77–78 (FT), Lys84, and Gln106 each bind FMN. Residues Tyr124, Arg128, and Ser132 each coordinate substrate. Residues 141-142 (QS) and Trp186 each bind FMN. Position 192-194 (192-194 (RLH)) interacts with substrate. Residue Arg196 participates in FMN binding.

The protein belongs to the pyridoxamine 5'-phosphate oxidase family. Homodimer. The cofactor is FMN.

The catalysed reaction is pyridoxamine 5'-phosphate + O2 + H2O = pyridoxal 5'-phosphate + H2O2 + NH4(+). It catalyses the reaction pyridoxine 5'-phosphate + O2 = pyridoxal 5'-phosphate + H2O2. It functions in the pathway cofactor metabolism; pyridoxal 5'-phosphate salvage; pyridoxal 5'-phosphate from pyridoxamine 5'-phosphate: step 1/1. Its pathway is cofactor metabolism; pyridoxal 5'-phosphate salvage; pyridoxal 5'-phosphate from pyridoxine 5'-phosphate: step 1/1. Catalyzes the oxidation of either pyridoxine 5'-phosphate (PNP) or pyridoxamine 5'-phosphate (PMP) into pyridoxal 5'-phosphate (PLP). This is Pyridoxine/pyridoxamine 5'-phosphate oxidase from Microcystis aeruginosa (strain NIES-843 / IAM M-2473).